Consider the following 490-residue polypeptide: GTPase Der (490 aa).

2 EngA-type G domains span residues 1-165 (MRIA…QIPV) and 227-400 (LKVA…TIAT). GTP contacts are provided by residues 7–14 (GRPNVGKS), 54–58 (DTGGV), 117–120 (NKAD), 233–240 (GHPNVGKS), 280–284 (DTAGL), and 345–348 (NKWD). One can recognise a KH-like domain in the interval 401-485 (TKLSTSLVNK…PFDLEYKAKP (85 aa)).

The protein belongs to the TRAFAC class TrmE-Era-EngA-EngB-Septin-like GTPase superfamily. EngA (Der) GTPase family. Associates with the 50S ribosomal subunit.

Its function is as follows. GTPase that plays an essential role in the late steps of ribosome biogenesis. This is GTPase Der from Chlamydia trachomatis serovar L2b (strain UCH-1/proctitis).